The primary structure comprises 295 residues: ATP synthase gamma chain (295 aa).

This sequence belongs to the ATPase gamma chain family. F-type ATPases have 2 components, CF(1) - the catalytic core - and CF(0) - the membrane proton channel. CF(1) has five subunits: alpha(3), beta(3), gamma(1), delta(1), epsilon(1). CF(0) has three main subunits: a, b and c.

The protein localises to the cell inner membrane. Produces ATP from ADP in the presence of a proton gradient across the membrane. The gamma chain is believed to be important in regulating ATPase activity and the flow of protons through the CF(0) complex. This is ATP synthase gamma chain from Maricaulis maris (strain MCS10) (Caulobacter maris).